The primary structure comprises 492 residues: Cysteine--tRNA ligase (492 aa).

Position 31 (cysteine 31) interacts with Zn(2+). The 'HIGH' region signature appears at 33-43 (PTVYGDPHLGH). Cysteine 226, histidine 251, and glutamate 255 together coordinate Zn(2+). The short motif at 283–287 (KMGKS) is the 'KMSKS' region element. Residue lysine 286 coordinates ATP.

The protein belongs to the class-I aminoacyl-tRNA synthetase family. As to quaternary structure, monomer. It depends on Zn(2+) as a cofactor.

The protein localises to the cytoplasm. The catalysed reaction is tRNA(Cys) + L-cysteine + ATP = L-cysteinyl-tRNA(Cys) + AMP + diphosphate. The polypeptide is Cysteine--tRNA ligase (Azobacteroides pseudotrichonymphae genomovar. CFP2).